The sequence spans 59 residues: SPbeta prophage-derived uncharacterized protein YosB (59 aa).

The protein is SPbeta prophage-derived uncharacterized protein YosB (yosB) of Bacillus subtilis (strain 168).